Reading from the N-terminus, the 110-residue chain is UPF0060 membrane protein Dtpsy_1668 (110 aa).

The next 4 membrane-spanning stretches (helical) occupy residues 7 to 27 (LALF…PWLW), 33 to 53 (SAWL…LLTL), 63 to 83 (AAYG…VDGV), and 86 to 106 (GPWD…IAFA).

This sequence belongs to the UPF0060 family.

It is found in the cell inner membrane. This is UPF0060 membrane protein Dtpsy_1668 from Acidovorax ebreus (strain TPSY) (Diaphorobacter sp. (strain TPSY)).